Consider the following 300-residue polypeptide: Ankyrin repeat domain-containing protein 54 (300 aa).

The tract at residues 1–27 is disordered; it reads MAAAAGDADDEPRSGHSSSEGECAVAP. Position 2 is an N-acetylalanine (Ala-2). Residues Ser-58 and Ser-63 each carry the phosphoserine modification. The Nuclear localization signal (NLS) signature appears at 99–117; the sequence is RRLGPTGKEVHALKRLRDS. ANK repeat units follow at residues 109 to 138, 142 to 171, 175 to 204, and 208 to 244; these read HALK…DPCA, KGRT…DPNQ, LGNT…RVDA, and AGRT…IIHM. The LYN-binding stretch occupies residues 141–241; the sequence is DKGRTALHFA…EAVRLEVKQI (101 aa). Positions 283-293 match the Nuclear export signal (NES) motif; the sequence is LLASFTSLSLQ.

Interacts (via ankyrin repeat region) with LYN (via SH3-domain) in an activation-independent status of LYN. Forms a multiprotein complex with LYN and HCLS1. Interacts with TSN2, VAV1, DBNL and LASP1.

Its subcellular location is the nucleus. The protein localises to the cytoplasm. It is found in the midbody. Functionally, plays an important role in regulating intracellular signaling events associated with erythroid terminal differentiation. This chain is Ankyrin repeat domain-containing protein 54 (ANKRD54), found in Homo sapiens (Human).